The primary structure comprises 132 residues: MSKILNTIWQYVRAFVLIYACLYAGIFIASLLPVTIPGSIIGMLILFVLLALQILPAQWVNPGCYLLIRYMALLFVPIGVGVMQYFDLLRAQFGPVVVSCAISTLVVFLVVSWSSQLVHGERKVVGQKGSKE.

4 helical membrane-spanning segments follow: residues 8-28 (IWQY…GIFI), 31-51 (LLPV…VLLA), 63-83 (GCYL…VGVM), and 93-113 (FGPV…VVSW).

Belongs to the UPF0299 family.

It is found in the cell inner membrane. This is UPF0299 membrane protein YohJ from Escherichia fergusonii (strain ATCC 35469 / DSM 13698 / CCUG 18766 / IAM 14443 / JCM 21226 / LMG 7866 / NBRC 102419 / NCTC 12128 / CDC 0568-73).